A 556-amino-acid polypeptide reads, in one-letter code: MTSAGVAPTALRLLTALLLLLVAAPSHSLPLLTRGRWIVDEATGLRVKLACVNWVGHLEPGLPEGLNRLPVATVAHTISSLGFNCVRLTYSIHMLTRTSYTNATVAQTFARLNLTEAASGIEHNNPELLDLGHVAAYHHVVAALSEAGVMVILDNHVSKPKWCCAVDDGNGFFGDRYFNPNTWVEGLGLMATYFNNTPNVVAMSLRNELRGNRSTPISWSRHMQWGAATVHKANPKVLVILSGLQFDTDLSFLPVLPVTLPFKEKIVYEGHWYSFGVPWRTGLPNDVCKNETGRFKSNVGFVTSSANATAAPLFMSEFGIDQRYVNDNDNRYLNCILAYLAEEDLDWALWTMGGSYYYRSDKQPVKDFEETYGFFNHDWSRIRNPDFISRLKEIQQPIQDPYLAPGPYYQIIYHPASGLCVESGIGNTVHLGSCQSVRSRWNYDASVKGPIGLMGSSSCISTQGNGLPAIMTENCSAPNNTLWSTVSSAQLQLGTRVLGKDGKEKWMCLDGSKSPLISTNECICITDSHCYPKLNPEKQWFKVITTNKQLLHQLQL.

The signal sequence occupies residues 1-28; that stretch reads MTSAGVAPTALRLLTALLLLLVAAPSHS. Asn-102 and Asn-113 each carry an N-linked (GlcNAc...) asparagine glycan. The Proton donor/acceptor role is filled by Glu-208. 3 N-linked (GlcNAc...) asparagine glycosylation sites follow: Asn-212, Asn-290, and Asn-307. Glu-473 acts as the Nucleophile in catalysis. Residues Asn-474 and Asn-479 are each glycosylated (N-linked (GlcNAc...) asparagine).

The protein belongs to the glycosyl hydrolase 5 (cellulase A) family. Post-translationally, glycosylated.

May have glycosyl hydrolase activity. In Chamaecyparis obtusa (Hinoki false-cypress), this protein is Glycosyl hydrolase 5 family protein.